Reading from the N-terminus, the 284-residue chain is 2-dehydro-3-deoxyphosphooctonate aldolase (284 aa).

The protein belongs to the KdsA family.

It is found in the cytoplasm. It carries out the reaction D-arabinose 5-phosphate + phosphoenolpyruvate + H2O = 3-deoxy-alpha-D-manno-2-octulosonate-8-phosphate + phosphate. It functions in the pathway carbohydrate biosynthesis; 3-deoxy-D-manno-octulosonate biosynthesis; 3-deoxy-D-manno-octulosonate from D-ribulose 5-phosphate: step 2/3. It participates in bacterial outer membrane biogenesis; lipopolysaccharide biosynthesis. The protein is 2-dehydro-3-deoxyphosphooctonate aldolase of Bordetella petrii (strain ATCC BAA-461 / DSM 12804 / CCUG 43448).